The chain runs to 118 residues: Holo-[acyl-carrier-protein] synthase (118 aa).

D8 and E58 together coordinate Mg(2+).

It belongs to the P-Pant transferase superfamily. AcpS family. Requires Mg(2+) as cofactor.

It localises to the cytoplasm. It carries out the reaction apo-[ACP] + CoA = holo-[ACP] + adenosine 3',5'-bisphosphate + H(+). Functionally, transfers the 4'-phosphopantetheine moiety from coenzyme A to a Ser of acyl-carrier-protein. The chain is Holo-[acyl-carrier-protein] synthase from Listeria monocytogenes serotype 4b (strain CLIP80459).